The sequence spans 587 residues: Nucleoporin p58/p45 (587 aa).

5 tandem repeats follow at residues 7 to 8 (FG), 30 to 31 (FG), 44 to 45 (FG), 63 to 64 (FG), and 68 to 69 (FG). The 14 X 2 AA repeats of F-G stretch occupies residues 7-567 (FGSGTLGSTT…VSNPASAGFG (561 aa)). A disordered region spans residues 196-236 (TSAASNEGLGGIDFSTSSDKKSDKTGTRPEDSKALKDENLP). The segment covering 213–234 (SDKKSDKTGTRPEDSKALKDEN) has biased composition (basic and acidic residues). Coiled coils occupy residues 244 to 264 (ENLQ…SRMS) and 302 to 369 (ETAQ…SHIT). Position 319 is a phosphothreonine (Thr319). A run of 9 repeats spans residues 476–477 (FG), 480–481 (FG), 501–502 (FG), 507–508 (FG), 517–518 (FG), 519–520 (FG), 533–534 (FG), 556–557 (FG), and 566–567 (FG). The segment at 565-587 (GFGTGGQLLQLKRPPAGNKRGKR) is disordered.

This sequence belongs to the NUP58 family. Component of the p62 complex, a complex at least composed of NUP62, NUP54, and NUP58. Interacts with NUTF2. Interacts with SRP1-alpha and Importin p97 proteins when they are together, but not with SRP1-alpha protein alone. In terms of processing, O-glycosylated.

It is found in the nucleus. The protein localises to the nuclear pore complex. It localises to the nucleus membrane. Its function is as follows. Component of the nuclear pore complex, a complex required for the trafficking across the nuclear membrane. This is Nucleoporin p58/p45 from Mus musculus (Mouse).